Here is a 119-residue protein sequence, read N- to C-terminus: Large ribosomal subunit protein bL20 (119 aa).

The protein belongs to the bacterial ribosomal protein bL20 family.

Binds directly to 23S ribosomal RNA and is necessary for the in vitro assembly process of the 50S ribosomal subunit. It is not involved in the protein synthesizing functions of that subunit. This Streptococcus equi subsp. equi (strain 4047) protein is Large ribosomal subunit protein bL20.